Here is a 232-residue protein sequence, read N- to C-terminus: Biosynthetic peptidoglycan transglycosylase (232 aa).

A helical membrane pass occupies residues 12-31; that stretch reads YLLWFMAASVVLVAVLRWVP.

The protein belongs to the glycosyltransferase 51 family.

The protein localises to the cell inner membrane. It catalyses the reaction [GlcNAc-(1-&gt;4)-Mur2Ac(oyl-L-Ala-gamma-D-Glu-L-Lys-D-Ala-D-Ala)](n)-di-trans,octa-cis-undecaprenyl diphosphate + beta-D-GlcNAc-(1-&gt;4)-Mur2Ac(oyl-L-Ala-gamma-D-Glu-L-Lys-D-Ala-D-Ala)-di-trans,octa-cis-undecaprenyl diphosphate = [GlcNAc-(1-&gt;4)-Mur2Ac(oyl-L-Ala-gamma-D-Glu-L-Lys-D-Ala-D-Ala)](n+1)-di-trans,octa-cis-undecaprenyl diphosphate + di-trans,octa-cis-undecaprenyl diphosphate + H(+). Its pathway is cell wall biogenesis; peptidoglycan biosynthesis. Its function is as follows. Peptidoglycan polymerase that catalyzes glycan chain elongation from lipid-linked precursors. The sequence is that of Biosynthetic peptidoglycan transglycosylase from Pseudomonas aeruginosa (strain ATCC 15692 / DSM 22644 / CIP 104116 / JCM 14847 / LMG 12228 / 1C / PRS 101 / PAO1).